Reading from the N-terminus, the 446-residue chain is Glutamate-1-semialdehyde 2,1-aminomutase (446 aa).

At K278 the chain carries N6-(pyridoxal phosphate)lysine.

This sequence belongs to the class-III pyridoxal-phosphate-dependent aminotransferase family. HemL subfamily. As to quaternary structure, homodimer. Pyridoxal 5'-phosphate serves as cofactor.

It localises to the cytoplasm. The catalysed reaction is (S)-4-amino-5-oxopentanoate = 5-aminolevulinate. The protein operates within porphyrin-containing compound metabolism; protoporphyrin-IX biosynthesis; 5-aminolevulinate from L-glutamyl-tRNA(Glu): step 2/2. In Deinococcus geothermalis (strain DSM 11300 / CIP 105573 / AG-3a), this protein is Glutamate-1-semialdehyde 2,1-aminomutase.